A 479-amino-acid chain; its full sequence is Sodium-coupled neutral amino acid transporter 5 (479 aa).

Residues 1–61 lie on the Cytoplasmic side of the membrane; that stretch reads MAISCAVGME…LDFEGKTSFG (61 aa). A helical transmembrane segment spans residues 62–84; sequence MSVFNLSNAIMGSGILGLAYAMA. Residues 85 to 97 lie on the Extracellular side of the membrane; sequence HTGVIFFLALLLC. A helical transmembrane segment spans residues 98 to 118; that stretch reads IALLSSYSIHLLLTCASVVGI. At 119-135 the chain is on the cytoplasmic side; the sequence is RAYEQLGQRAFGPAGKV. The chain crosses the membrane as a helical span at residues 136–156; the sequence is VVAIIICLHNVGAMSSYLFII. Residues 157–176 are Extracellular-facing; that stretch reads KSELPLVIGTFLHMDPEGDW. The helical transmembrane segment at 177-197 threads the bilayer; it reads FLKGNLLIILVSLLIILPLAL. Over 198-202 the chain is Cytoplasmic; the sequence is MKHLG. Residues 203–223 traverse the membrane as a helical segment; sequence YLGYTSSLSLTCMLFFLISVI. At 224-264 the chain is on the extracellular side; the sequence is YKKFQIGCDVSHNDTVVEAEQAPLQAFNSSCEAELFTVDSQ. Cysteines 231 and 254 form a disulfide. Asn-236 carries an N-linked (GlcNAc...) asparagine glycan. Residues 265–285 form a helical membrane-spanning segment; it reads MSYTVPIMAFAFVCHPEVLPI. Over 286-302 the chain is Cytoplasmic; that stretch reads YTELCRPTQRRMQAVAN. The helical transmembrane segment at 303–323 threads the bilayer; it reads MSIGAMFIMYGLTATFGYLTF. Over 324–341 the chain is Extracellular; the sequence is YSTVKAEMLEMYTQEDML. The helical transmembrane segment at 342-362 threads the bilayer; the sequence is ILCVRLAVLLAVTLTVPVVLF. The Cytoplasmic segment spans residues 363–383; sequence PIRRALQQLLFPSKAFSWLRH. Residues 384–404 traverse the membrane as a helical segment; it reads VAIALILLILVNILVICVPTI. At 405–406 the chain is on the extracellular side; the sequence is RD. The chain crosses the membrane as a helical span at residues 407–427; that stretch reads IFGFIGSTSAPSLIFILPSVF. The Cytoplasmic portion of the chain corresponds to 428–446; sequence YLRIVPTEVEPLFSWPKIQ. The helical transmembrane segment at 447–467 threads the bilayer; it reads ALCFGVLGVLFMAISLGFMFA. Over 468–479 the chain is Extracellular; it reads NWATGQSRMSGH.

This sequence belongs to the amino acid/polyamine transporter 2 family. Expressed in the ganglion cell layer and the nerve fiber layer (at protein level). Also expreseed in the cells of the inner nuclear layer and in the inner plexiform layer (at protein level). Expressed in Mueller and ganglion retinal cell.

It is found in the cell membrane. The enzyme catalyses L-glutamine(out) + Na(+)(out) + H(+)(in) = L-glutamine(in) + Na(+)(in) + H(+)(out). It carries out the reaction L-serine(out) + Na(+)(out) + H(+)(in) = L-serine(in) + Na(+)(in) + H(+)(out). It catalyses the reaction L-alanine(out) + Na(+)(out) + H(+)(in) = L-alanine(in) + Na(+)(in) + H(+)(out). The catalysed reaction is glycine(out) + Na(+)(out) + H(+)(in) = glycine(in) + Na(+)(in) + H(+)(out). The enzyme catalyses L-asparagine(out) + Na(+)(out) + H(+)(in) = L-asparagine(in) + Na(+)(in) + H(+)(out). It carries out the reaction L-histidine(out) + Na(+)(out) + H(+)(in) = L-histidine(in) + Na(+)(in) + H(+)(out). It catalyses the reaction L-cysteine(out) + Na(+)(out) + H(+)(in) = L-cysteine(in) + Na(+)(in) + H(+)(out). With respect to regulation, not inhibited by lithium. Partial allosteric regulation on ions sodium binding. In terms of biological role, symporter that cotransports neutral amino acids and sodium ions, coupled to an H(+) antiporter activity. Releases L-glutamine and glycine from astroglial cells and may participate in the glutamate/GABA-L-glutamine cycle and the NMDA receptors activation. In addition, contributes significantly to L-glutamine uptake in retina, namely in ganglion and Mueller cells therefore, participates in the retinal glutamate-glutamine cycle. The transport activity is pH sensitive, Li(+) tolerant, bidirectional and associated with large uncoupled fluxes of protons. Moreover functions in both direction and is associated with large uncoupled fluxes of protons. The transport is electroneutral coupled to the cotransport of 1 Na(+) and the antiport of 1 H(+). May have a particular importance for modulation of net hepatic glutamine flux. The chain is Sodium-coupled neutral amino acid transporter 5 from Mus musculus (Mouse).